The following is a 252-amino-acid chain: 2-succinyl-6-hydroxy-2,4-cyclohexadiene-1-carboxylate synthase (252 aa).

This sequence belongs to the AB hydrolase superfamily. MenH family. As to quaternary structure, monomer.

The catalysed reaction is 5-enolpyruvoyl-6-hydroxy-2-succinyl-cyclohex-3-ene-1-carboxylate = (1R,6R)-6-hydroxy-2-succinyl-cyclohexa-2,4-diene-1-carboxylate + pyruvate. The protein operates within quinol/quinone metabolism; 1,4-dihydroxy-2-naphthoate biosynthesis; 1,4-dihydroxy-2-naphthoate from chorismate: step 3/7. Its pathway is quinol/quinone metabolism; menaquinone biosynthesis. In terms of biological role, catalyzes a proton abstraction reaction that results in 2,5-elimination of pyruvate from 2-succinyl-5-enolpyruvyl-6-hydroxy-3-cyclohexene-1-carboxylate (SEPHCHC) and the formation of 2-succinyl-6-hydroxy-2,4-cyclohexadiene-1-carboxylate (SHCHC). In Shigella dysenteriae serotype 1 (strain Sd197), this protein is 2-succinyl-6-hydroxy-2,4-cyclohexadiene-1-carboxylate synthase.